The chain runs to 301 residues: GTP cyclohydrolase FolE2 (301 aa).

Belongs to the GTP cyclohydrolase IV family.

It catalyses the reaction GTP + H2O = 7,8-dihydroneopterin 3'-triphosphate + formate + H(+). The protein operates within cofactor biosynthesis; 7,8-dihydroneopterin triphosphate biosynthesis; 7,8-dihydroneopterin triphosphate from GTP: step 1/1. Its function is as follows. Converts GTP to 7,8-dihydroneopterin triphosphate. The chain is GTP cyclohydrolase FolE2 from Exiguobacterium sibiricum (strain DSM 17290 / CCUG 55495 / CIP 109462 / JCM 13490 / 255-15).